The sequence spans 38 residues: TNGVPGKCTKPGGCSTYCRDTTGTMGLCKNSKCYCNKY.

3 disulfide bridges follow: cysteine 8–cysteine 28, cysteine 14–cysteine 33, and cysteine 18–cysteine 35.

Belongs to the short scorpion toxin superfamily. Potassium channel inhibitor family. In terms of tissue distribution, expressed by the venom gland.

It is found in the secreted. In terms of biological role, a probable toxin that has no activity on the tested mammalian voltage-gated potassium channels (when tested at 1 uM) and is not toxic to mice. It resembles alpha toxins that block voltage-gated potassium channels. The polypeptide is Toxin Bot33 (Buthus occitanus tunetanus (Common European scorpion)).